The sequence spans 154 residues: uncharacterized protein (154 aa).

The HTH marR-type domain maps to 14–146; it reads AMNLYRVFAR…LIVLLKKAGI (133 aa). Positions 60-83 form a DNA-binding region, H-T-H motif; that stretch reads LQQIGSRLLLVSGNVTYVIDKLER.

This is an uncharacterized protein from Bacillus subtilis (strain 168).